Consider the following 226-residue polypeptide: Orotidine 5'-phosphate decarboxylase (226 aa).

Substrate is bound by residues Asp-9, Lys-31, 58–67 (DLKLYDIPNT), Thr-115, Arg-176, Gln-184, Gly-204, and Arg-205. Residue Lys-60 is the Proton donor of the active site.

This sequence belongs to the OMP decarboxylase family. Type 1 subfamily. In terms of assembly, homodimer.

The enzyme catalyses orotidine 5'-phosphate + H(+) = UMP + CO2. It functions in the pathway pyrimidine metabolism; UMP biosynthesis via de novo pathway; UMP from orotate: step 2/2. Functionally, catalyzes the decarboxylation of orotidine 5'-monophosphate (OMP) to uridine 5'-monophosphate (UMP). The chain is Orotidine 5'-phosphate decarboxylase from Wolbachia pipientis subsp. Culex pipiens (strain wPip).